The chain runs to 261 residues: Cytochrome c oxidase subunit 3 (261 aa).

The Mitochondrial matrix portion of the chain corresponds to 1-15 (MAHQAHSYHMVDPSP). Residues 16–34 (WPIFGATAALLTTSGLIMW) form a helical membrane-spanning segment. Residues 35–40 (FHYNSL) are Mitochondrial intermembrane-facing. The helical transmembrane segment at 41–66 (YLLTLGLLSMFLVMIQWWRDIVREST) threads the bilayer. The Mitochondrial matrix segment spans residues 67–72 (FQGHHT). Residues 73–105 (PTVQKGLRYGMILFITSEAFFFLGFFWAFFHSS) traverse the membrane as a helical segment. Topologically, residues 106 to 128 (LAPTPELGAQWPPTGINPLNPLE) are mitochondrial intermembrane. Residues 129–152 (VPLLNTAILLASGVTVTWAHHSIT) form a helical membrane-spanning segment. Residues 153–155 (ESN) are Mitochondrial matrix-facing. The chain crosses the membrane as a helical span at residues 156–183 (RKQAIHALSLTIILGFYFTALQAMEYHE). Topologically, residues 184–190 (ASFSIAD) are mitochondrial intermembrane. Residues 191-223 (GVYGSTFFVATGFHGLHVIIGSSFLTVCLLRLI) form a helical membrane-spanning segment. The Mitochondrial matrix portion of the chain corresponds to 224–232 (KFHFTTNHH). The chain crosses the membrane as a helical span at residues 233 to 256 (FGFEAAAWYWHFVDVIWLFLYMSI). Residues 257–261 (YWWGS) are Mitochondrial intermembrane-facing.

Belongs to the cytochrome c oxidase subunit 3 family. As to quaternary structure, component of the cytochrome c oxidase (complex IV, CIV), a multisubunit enzyme composed of 14 subunits. The complex is composed of a catalytic core of 3 subunits MT-CO1, MT-CO2 and MT-CO3, encoded in the mitochondrial DNA, and 11 supernumerary subunits COX4I, COX5A, COX5B, COX6A, COX6B, COX6C, COX7A, COX7B, COX7C, COX8 and NDUFA4, which are encoded in the nuclear genome. The complex exists as a monomer or a dimer and forms supercomplexes (SCs) in the inner mitochondrial membrane with NADH-ubiquinone oxidoreductase (complex I, CI) and ubiquinol-cytochrome c oxidoreductase (cytochrome b-c1 complex, complex III, CIII), resulting in different assemblies (supercomplex SCI(1)III(2)IV(1) and megacomplex MCI(2)III(2)IV(2)).

The protein localises to the mitochondrion inner membrane. It carries out the reaction 4 Fe(II)-[cytochrome c] + O2 + 8 H(+)(in) = 4 Fe(III)-[cytochrome c] + 2 H2O + 4 H(+)(out). Its function is as follows. Component of the cytochrome c oxidase, the last enzyme in the mitochondrial electron transport chain which drives oxidative phosphorylation. The respiratory chain contains 3 multisubunit complexes succinate dehydrogenase (complex II, CII), ubiquinol-cytochrome c oxidoreductase (cytochrome b-c1 complex, complex III, CIII) and cytochrome c oxidase (complex IV, CIV), that cooperate to transfer electrons derived from NADH and succinate to molecular oxygen, creating an electrochemical gradient over the inner membrane that drives transmembrane transport and the ATP synthase. Cytochrome c oxidase is the component of the respiratory chain that catalyzes the reduction of oxygen to water. Electrons originating from reduced cytochrome c in the intermembrane space (IMS) are transferred via the dinuclear copper A center (CU(A)) of subunit 2 and heme A of subunit 1 to the active site in subunit 1, a binuclear center (BNC) formed by heme A3 and copper B (CU(B)). The BNC reduces molecular oxygen to 2 water molecules using 4 electrons from cytochrome c in the IMS and 4 protons from the mitochondrial matrix. This chain is Cytochrome c oxidase subunit 3 (MT-CO3), found in Struthio camelus (Common ostrich).